The chain runs to 61 residues: Adipokinetic prohormone type 2 (61 aa).

The N-terminal stretch at Met-1 to Ala-22 is a signal peptide. At Gln-23 the chain carries Pyrrolidone carboxylic acid. Tryptophan amide is present on Trp-30.

It belongs to the AKH/HRTH/RPCH family. As to quaternary structure, adipokinetic hormone precursor-related peptide (APRP) can form three type of disulfide-bond dimers: p1 (alpha-alpha), p2 (alpha-beta), and p3 (beta-beta).

The protein resides in the secreted. Functionally, this hormone, released from cells in the corpora cardiaca, causes release of diglycerides from the fat body and stimulation of muscles to use these diglycerides as an energy source during energy-demanding processes. This Schistocerca nitens (Vagrant locust) protein is Adipokinetic prohormone type 2.